Consider the following 94-residue polypeptide: Pyrimidine/purine nucleoside phosphorylase (94 aa).

The protein belongs to the nucleoside phosphorylase PpnP family.

It catalyses the reaction a purine D-ribonucleoside + phosphate = a purine nucleobase + alpha-D-ribose 1-phosphate. It carries out the reaction adenosine + phosphate = alpha-D-ribose 1-phosphate + adenine. The enzyme catalyses cytidine + phosphate = cytosine + alpha-D-ribose 1-phosphate. The catalysed reaction is guanosine + phosphate = alpha-D-ribose 1-phosphate + guanine. It catalyses the reaction inosine + phosphate = alpha-D-ribose 1-phosphate + hypoxanthine. It carries out the reaction thymidine + phosphate = 2-deoxy-alpha-D-ribose 1-phosphate + thymine. The enzyme catalyses uridine + phosphate = alpha-D-ribose 1-phosphate + uracil. The catalysed reaction is xanthosine + phosphate = alpha-D-ribose 1-phosphate + xanthine. In terms of biological role, catalyzes the phosphorolysis of diverse nucleosides, yielding D-ribose 1-phosphate and the respective free bases. Can use uridine, adenosine, guanosine, cytidine, thymidine, inosine and xanthosine as substrates. Also catalyzes the reverse reactions. In Salmonella newport (strain SL254), this protein is Pyrimidine/purine nucleoside phosphorylase.